The chain runs to 245 residues: Purine nucleoside phosphorylase (245 aa).

Position 7 (H7) interacts with a purine D-ribonucleoside. Residues 23–27 (GDPGR), R45, and 88–91 (RAGS) each bind phosphate. 183–184 (ME) is a binding site for a purine D-ribonucleoside. D206 (proton donor) is an active-site residue.

Belongs to the PNP/MTAP phosphorylase family. As to quaternary structure, homohexamer; trimer of homodimers.

It catalyses the reaction inosine + phosphate = alpha-D-ribose 1-phosphate + hypoxanthine. The enzyme catalyses guanosine + phosphate = alpha-D-ribose 1-phosphate + guanine. It carries out the reaction 2'-deoxyguanosine + phosphate = 2-deoxy-alpha-D-ribose 1-phosphate + guanine. The catalysed reaction is 2'-deoxyinosine + phosphate = 2-deoxy-alpha-D-ribose 1-phosphate + hypoxanthine. It catalyses the reaction S-methyl-5'-thioinosine + phosphate = 5-(methylsulfanyl)-alpha-D-ribose 1-phosphate + hypoxanthine. It participates in purine metabolism; purine nucleoside salvage. Inhibited by Immucillin-H and 5'-methylthio-Immucillin-H. Inhibited by 5'-deaza-1'-aza-2c-deoxy-1'-(9-methylene)-Immucilin-G (DADMe-ImmG). In terms of biological role, as part of the purine salvage pathway, catalyzes the phosphorolytic breakdown of the N-glycosidic bond in the beta-(deoxy)ribonucleoside molecules, with the formation of the corresponding free purine bases and pentose-1-phosphate. Preferentially acts on inosine and guanosine, and to a lesser extent on 2'-deoxyguanosine and guanosine. Also catalyzes the phosphorylation of S-methyl-5'-thioinosine (MTI) to hypoxanthine; MTI is produced by adenosine deaminase (ADA)-mediated breakdown of S-methyl-5'-thioadenosine (MTA), a major by-product of polyamine biosynthesis. Generates hypoxanthine from both the purine salvage pathway and from polyamine metabolism which is required for nucleic acids synthesis. Has no activity towards adenosine. In Plasmodium falciparum (isolate 3D7), this protein is Purine nucleoside phosphorylase.